The primary structure comprises 91 residues: Probable Fe(2+)-trafficking protein (91 aa).

Belongs to the Fe(2+)-trafficking protein family.

Functionally, could be a mediator in iron transactions between iron acquisition and iron-requiring processes, such as synthesis and/or repair of Fe-S clusters in biosynthetic enzymes. The chain is Probable Fe(2+)-trafficking protein from Histophilus somni (strain 129Pt) (Haemophilus somnus).